The primary structure comprises 323 residues: Beta-ketoacyl-[acyl-carrier-protein] synthase III (323 aa).

Residues C113 and H250 contribute to the active site. The ACP-binding stretch occupies residues 251 to 255 (QANRR). N280 is a catalytic residue.

Belongs to the thiolase-like superfamily. FabH family. As to quaternary structure, homodimer.

Its subcellular location is the cytoplasm. It carries out the reaction malonyl-[ACP] + acetyl-CoA + H(+) = 3-oxobutanoyl-[ACP] + CO2 + CoA. The protein operates within lipid metabolism; fatty acid biosynthesis. Catalyzes the condensation reaction of fatty acid synthesis by the addition to an acyl acceptor of two carbons from malonyl-ACP. Catalyzes the first condensation reaction which initiates fatty acid synthesis and may therefore play a role in governing the total rate of fatty acid production. Possesses both acetoacetyl-ACP synthase and acetyl transacylase activities. Its substrate specificity determines the biosynthesis of branched-chain and/or straight-chain of fatty acids. The sequence is that of Beta-ketoacyl-[acyl-carrier-protein] synthase III from Rhizobium johnstonii (strain DSM 114642 / LMG 32736 / 3841) (Rhizobium leguminosarum bv. viciae).